Here is a 311-residue protein sequence, read N- to C-terminus: Chalcone synthase 4 (311 aa).

Cysteine 164 is a catalytic residue.

Belongs to the thiolase-like superfamily. Chalcone/stilbene synthases family.

It carries out the reaction (E)-4-coumaroyl-CoA + 3 malonyl-CoA + 3 H(+) = 2',4,4',6'-tetrahydroxychalcone + 3 CO2 + 4 CoA. It participates in secondary metabolite biosynthesis; flavonoid biosynthesis. Its function is as follows. The primary product of this enzyme is 4,2',4',6'-tetrahydroxychalcone (also termed naringenin-chalcone or chalcone) which can under specific conditions spontaneously isomerize into naringenin. This Trifolium subterraneum (Subterranean clover) protein is Chalcone synthase 4 (CHS4).